Here is a 193-residue protein sequence, read N- to C-terminus: Ion-translocating oxidoreductase complex subunit A (193 aa).

Transmembrane regions (helical) follow at residues 5 to 25 (LLLF…FLGL), 39 to 59 (MGMG…AWLI), 63 to 83 (ILIP…VIAV), 102 to 122 (LLGI…VALL), 134 to 154 (ALYG…FAAI), and 171 to 191 (AIAL…SGLV).

The protein belongs to the NqrDE/RnfAE family. In terms of assembly, the complex is composed of six subunits: RsxA, RsxB, RsxC, RsxD, RsxE and RsxG.

Its subcellular location is the cell inner membrane. Part of a membrane-bound complex that couples electron transfer with translocation of ions across the membrane. Required to maintain the reduced state of SoxR. The protein is Ion-translocating oxidoreductase complex subunit A of Escherichia fergusonii (strain ATCC 35469 / DSM 13698 / CCUG 18766 / IAM 14443 / JCM 21226 / LMG 7866 / NBRC 102419 / NCTC 12128 / CDC 0568-73).